The chain runs to 71 residues: ATP synthase F(0) complex subunit e, mitochondrial (71 aa).

N6-acetyllysine is present on Lys34. At Ser68 the chain carries Phosphoserine.

It belongs to the ATPase e subunit family. Component of the ATP synthase complex composed at least of ATP5F1A/subunit alpha, ATP5F1B/subunit beta, ATP5MC1/subunit c (homooctomer), MT-ATP6/subunit a, MT-ATP8/subunit 8, ATP5ME/subunit e, ATP5MF/subunit f, ATP5MG/subunit g, ATP5MK/subunit k, ATP5MJ/subunit j, ATP5F1C/subunit gamma, ATP5F1D/subunit delta, ATP5F1E/subunit epsilon, ATP5PF/subunit F6, ATP5PB/subunit b, ATP5PD/subunit d, ATP5PO/subunit OSCP. ATP synthase complex consists of a soluble F(1) head domain (subunits alpha(3) and beta(3)) - the catalytic core - and a membrane F(0) domain - the membrane proton channel (subunits c, a, 8, e, f, g, k and j). These two domains are linked by a central stalk (subunits gamma, delta, and epsilon) rotating inside the F1 region and a stationary peripheral stalk (subunits F6, b, d, and OSCP).

Its subcellular location is the mitochondrion. The protein resides in the mitochondrion inner membrane. Subunit e, of the mitochondrial membrane ATP synthase complex (F(1)F(0) ATP synthase or Complex V) that produces ATP from ADP in the presence of a proton gradient across the membrane which is generated by electron transport complexes of the respiratory chain. ATP synthase complex consist of a soluble F(1) head domain - the catalytic core - and a membrane F(1) domain - the membrane proton channel. These two domains are linked by a central stalk rotating inside the F(1) region and a stationary peripheral stalk. During catalysis, ATP synthesis in the catalytic domain of F(1) is coupled via a rotary mechanism of the central stalk subunits to proton translocation. In vivo, can only synthesize ATP although its ATP hydrolase activity can be activated artificially in vitro. Part of the complex F(0) domain. The protein is ATP synthase F(0) complex subunit e, mitochondrial of Rattus norvegicus (Rat).